Here is a 146-residue protein sequence, read N- to C-terminus: Lysozyme C (146 aa).

The signal sequence occupies residues 1 to 16 (SGKYISWEDSCSYLQL). Positions 17–146 (QKYERCELAK…LSQWTQGCKL (130 aa)) constitute a C-type lysozyme domain. Cystine bridges form between Cys-22-Cys-144, Cys-46-Cys-132, Cys-81-Cys-97, and Cys-93-Cys-111. Catalysis depends on residues Glu-51 and Asp-69.

This sequence belongs to the glycosyl hydrolase 22 family. In terms of tissue distribution, expressed by the skin glands.

It localises to the secreted. It carries out the reaction Hydrolysis of (1-&gt;4)-beta-linkages between N-acetylmuramic acid and N-acetyl-D-glucosamine residues in a peptidoglycan and between N-acetyl-D-glucosamine residues in chitodextrins.. Its function is as follows. Lysozymes have primarily a bacteriolytic function; those in tissues and body fluids are associated with the monocyte-macrophage system and enhance the activity of immunoagents. Has antibacterial activity against the Gram-positive bacterium S.aureus and against the Gram-negative bacterium E.coli with a MIC of 1 uM and 8 uM respectively. No antifungal activity against C.albicans. This is Lysozyme C from Bufo gargarizans andrewsi (Andrew's toad).